We begin with the raw amino-acid sequence, 872 residues long: Metabotropic glutamate receptor 2 (872 aa).

The first 18 residues, 1–18 (MGSLLALLALLLLWGAVA), serve as a signal peptide directing secretion. Over 19 to 567 (EGPAKKVLTL…QEYIRWGDAW (549 aa)) the chain is Extracellular. A disulfide bridge links Cys50 with Cys92. Arg57, Arg61, Ser145, Ala166, and Thr168 together coordinate L-glutamate. Residues Asn203 and Asn286 are each glycosylated (N-linked (GlcNAc...) asparagine). 7 disulfide bridges follow: Cys234–Cys518, Cys355–Cys362, Cys400–Cys407, Cys500–Cys519, Cys504–Cys522, Cys525–Cys537, and Cys540–Cys553. Residue Asp295 participates in L-glutamate binding. Residue Asn338 is glycosylated (N-linked (GlcNAc...) asparagine). Lys377 serves as a coordination point for L-glutamate. Asn402 carries N-linked (GlcNAc...) asparagine glycosylation. The N-linked (GlcNAc...) asparagine glycan is linked to Asn547. Residues 568-590 (AVGPVTIACLGALATLFVLGVFV) form a helical membrane-spanning segment. Topologically, residues 591-604 (RHNATPVVKASGRE) are cytoplasmic. The chain crosses the membrane as a helical span at residues 605-625 (LCYILLGGVFLCYCMTFIFIA). The Extracellular portion of the chain corresponds to 626 to 636 (KPSTAVCTLRR). Cys632 and Cys721 are oxidised to a cystine. Residues 637–655 (LGLGTAFSVCYSALLTKTN) traverse the membrane as a helical segment. The Cytoplasmic portion of the chain corresponds to 656-679 (RIARIFGGAREGAQRPRFISPASQ). Positions 677–685 (ASQVAICLA) are important for interaction with HTR2A. A helical membrane pass occupies residues 680-700 (VAICLALISGQLLIVVAWLVV). The Extracellular segment spans residues 701–725 (EAPGTGKETAPERREVVTLRCNHRD). Residues 726–747 (ASMLGSLAYNVLLIALCTLYAF) traverse the membrane as a helical segment. Over 748–760 (KTRKCPENFNEAK) the chain is Cytoplasmic. Residues 761–783 (FIGFTMYTTCIIWLAFLPIFYVT) traverse the membrane as a helical segment. Over 784–793 (SSDYRVQTTT) the chain is Extracellular. A helical membrane pass occupies residues 794-819 (MCVSVSLSGSVVLGCLFAPKLHIILF). At 820–872 (QPQKNVVSHRAPTSRFGSAAARASSSLGQGSGSQFVPTVCNGREVVDSTTSSL) the chain is on the cytoplasmic side.

The protein belongs to the G-protein coupled receptor 3 family. Forms heterodimers with GRM3 or GRM4. Interacts with TAMALIN. Interacts with HTR2A. As to quaternary structure, (Microbial infection) Interacts with H5N6 virus protein HA. In terms of assembly, (Microbial infection) Interacts with rabies virus protein G. (Microbial infection) Interacts with SARS-CoV-2 virus spike protein S. Detected in brain cortex (at protein level). Widely expressed in different regions of the adult brain as well as in fetal brain.

Its subcellular location is the cell membrane. It localises to the synapse. The protein resides in the cell projection. It is found in the dendrite. Its function is as follows. Dimeric G protein-coupled receptor which is activated by the excitatory neurotransmitter L-glutamate. Plays critical roles in modulating synaptic transmission and neuronal excitability. Upon activation by glutamate, inhibits presynaptic calcium channels, reducing further glutamate release and dampening excitatory signaling. Mechanistically, ligand binding causes a conformation change that triggers signaling via guanine nucleotide-binding proteins (G proteins) and modulates the activity of down-stream effectors, such as adenylate cyclase. May mediate suppression of neurotransmission or may be involved in synaptogenesis or synaptic stabilization. Functionally, (Microbial infection) Plays an important role in influenza virus internalization. In terms of biological role, (Microbial infection) Acts as a host entry factor for rabies virus that hijacks the endocytosis of GRM2 to enter cells. (Microbial infection) Acts as a host entry factor for SARS-CoV-2 that hijacks the endocytosis of GRM2 to enter cells. This is Metabotropic glutamate receptor 2 from Homo sapiens (Human).